Consider the following 464-residue polypeptide: Putative dipeptidase CPC735_014430 (464 aa).

Positions 1-34 are disordered; the sequence is MSTMSARDNEKGSARSQPSHAAASEIENVPRPSR. A helical membrane pass occupies residues 40 to 56; the sequence is GTMIKVFIICACAGIVS. Positions 93, 95, and 206 each coordinate Zn(2+). C145 and C235 are joined by a disulfide. Residue H233 coordinates substrate. H277 and H298 together coordinate Zn(2+). R309 and D369 together coordinate substrate. N382 carries N-linked (GlcNAc...) asparagine glycosylation.

It belongs to the metallo-dependent hydrolases superfamily. Peptidase M19 family. It depends on Zn(2+) as a cofactor.

It localises to the membrane. It carries out the reaction an L-aminoacyl-L-amino acid + H2O = 2 an L-alpha-amino acid. Hydrolyzes a wide range of dipeptides. This chain is Putative dipeptidase CPC735_014430, found in Coccidioides posadasii (strain C735) (Valley fever fungus).